We begin with the raw amino-acid sequence, 373 residues long: Dual-specificity RNA methyltransferase RlmN (373 aa).

The Proton acceptor role is filled by Glu-94. Residues 100 to 339 (EEDRATLCVS…VIVRKTRGDD (240 aa)) enclose the Radical SAM core domain. Cys-107 and Cys-344 form a disulfide bridge. [4Fe-4S] cluster is bound by residues Cys-114, Cys-118, and Cys-121. S-adenosyl-L-methionine contacts are provided by residues 168–169 (GE), Ser-200, 222–224 (SIH), and Asn-301. Residue Cys-344 is the S-methylcysteine intermediate of the active site.

It belongs to the radical SAM superfamily. RlmN family. [4Fe-4S] cluster is required as a cofactor.

The protein resides in the cytoplasm. It catalyses the reaction adenosine(2503) in 23S rRNA + 2 reduced [2Fe-2S]-[ferredoxin] + 2 S-adenosyl-L-methionine = 2-methyladenosine(2503) in 23S rRNA + 5'-deoxyadenosine + L-methionine + 2 oxidized [2Fe-2S]-[ferredoxin] + S-adenosyl-L-homocysteine. The catalysed reaction is adenosine(37) in tRNA + 2 reduced [2Fe-2S]-[ferredoxin] + 2 S-adenosyl-L-methionine = 2-methyladenosine(37) in tRNA + 5'-deoxyadenosine + L-methionine + 2 oxidized [2Fe-2S]-[ferredoxin] + S-adenosyl-L-homocysteine. In terms of biological role, specifically methylates position 2 of adenine 2503 in 23S rRNA and position 2 of adenine 37 in tRNAs. m2A2503 modification seems to play a crucial role in the proofreading step occurring at the peptidyl transferase center and thus would serve to optimize ribosomal fidelity. The chain is Dual-specificity RNA methyltransferase RlmN from Shewanella loihica (strain ATCC BAA-1088 / PV-4).